The sequence spans 111 residues: Natriuretic peptide TNP-b (111 aa).

An N-terminal signal peptide occupies residues 1–27 (MVGLSRLAGGGLLLLLLLALLPLALDG). The propeptide occupies 28 to 71 (KPAPLPQALPEALAGGTTALRRDVTEEQQQQLVAEESSGPAAGR). Disordered stretches follow at residues 51 to 77 (VTEEQQQQLVAEESSGPAAGRSDPKIG) and 92 to 111 (SGLGCNRPVQNRPKQIPGGS). A disulfide bridge links cysteine 80 with cysteine 96. The propeptide occupies 107-111 (IPGGS).

The protein belongs to the natriuretic peptide family. As to expression, expressed by the venom gland.

It localises to the secreted. Functionally, snake venom natriuretic peptide that exhibits vasoactive and probable hypotensive activity. Is only weakly active on natriuretic peptide receptor-C (NPR3). The polypeptide is Natriuretic peptide TNP-b (Oxyuranus scutellatus scutellatus (Australian taipan)).